Reading from the N-terminus, the 611-residue chain is Translation initiation factor RLI1 (611 aa).

2 4Fe-4S ferredoxin-type domains span residues 7 to 31 and 46 to 75; these read RVAIVNSDKCKPKKCRQECKKSCPV and RIAFISEQLCIGCGICPKRCPFGAITIINL. 2 ABC transporter domains span residues 77-318 and 345-565; these read TNLE…FLDG and AEKS…LKNL. Residues 110 to 117 and 382 to 389 each bind ATP; these read GTNGIGKS and GENGTGKT.

This sequence belongs to the ABC transporter superfamily. ABCE family. Component of the multifactor complex (MFC). The complex associates with pre-initiation complexes.

Its subcellular location is the cytoplasm. The protein resides in the nucleus. In terms of biological role, component of the multifactor complex (MFC) involved in translation initiation. Required for the binding of MFC to the 40S ribosome. Required for the processing and nuclear export of the 60S and 40S ribosomal subunits. This chain is Translation initiation factor RLI1 (RLI1), found in Chaetomium thermophilum (strain DSM 1495 / CBS 144.50 / IMI 039719) (Thermochaetoides thermophila).